The sequence spans 183 residues: Glutathione-regulated potassium-efflux system ancillary protein KefG (183 aa).

This sequence belongs to the NAD(P)H dehydrogenase (quinone) family. KefG subfamily. In terms of assembly, interacts with KefB.

Its subcellular location is the cell inner membrane. It catalyses the reaction a quinone + NADH + H(+) = a quinol + NAD(+). The enzyme catalyses a quinone + NADPH + H(+) = a quinol + NADP(+). Its function is as follows. Regulatory subunit of a potassium efflux system that confers protection against electrophiles. Required for full activity of KefB. This is Glutathione-regulated potassium-efflux system ancillary protein KefG from Escherichia coli O6:K15:H31 (strain 536 / UPEC).